The chain runs to 376 residues: Rhodopsin (376 aa).

Topologically, residues 1 to 51 (MSLINEPSYSAYSWGGQGGYGNQTVVDKVLPEMLHLIDPHWYQFPPMNPLW) are extracellular. Residue Asn-22 is glycosylated (N-linked (GlcNAc...) asparagine). A helical membrane pass occupies residues 52-76 (HGLLGFVIGCLGFVSVVGNGMVIYI). Topologically, residues 77–88 (FSTTKGLRTPSN) are cytoplasmic. A helical membrane pass occupies residues 89–113 (LLVVNLAFSDFLMMLSMSPPMVINC). Residues 114-128 (YYETWVLGPFMCELY) are Extracellular-facing. A disulfide bridge links Cys-125 with Cys-202. The chain crosses the membrane as a helical span at residues 129 to 148 (ALLGSLFGCGSIWTMVMIAL). The Cytoplasmic portion of the chain corresponds to 149–167 (DRYNVIVKGLAAKPMTNKT). The chain crosses the membrane as a helical span at residues 168 to 191 (AMLRILGIWAMSIAWTVFPLFGWN). The Extracellular portion of the chain corresponds to 192–215 (RYVPEGNMTACGTDYLNKEWVSRS). N-linked (GlcNAc...) asparagine glycosylation occurs at Asn-198. A helical membrane pass occupies residues 216–243 (YILVYSVFVYFLPLATIIYSYWFIVQAV). Residues 244-278 (SAHEKQMREQAKKMNVASLRSAENANTSAECKLAK) are Cytoplasmic-facing. Residues 279–302 (VALMTISLWFFAWTPYLVTDFSGI) traverse the membrane as a helical segment. Residues 303–309 (FEWGKIS) lie on the Extracellular side of the membrane. Residues 310–334 (PLATIWCSLFAKANAVYNPIVYGIS) traverse the membrane as a helical segment. Lys-321 carries the post-translational modification N6-(retinylidene)lysine. Residues 335–376 (HPKYRAALNKKFPSLACASEPDDTASQASGATTVSDEKSASA) lie on the Cytoplasmic side of the membrane. A disordered region spans residues 353–376 (SEPDDTASQASGATTVSDEKSASA). The span at 358–368 (TASQASGATTV) shows a compositional bias: polar residues.

Belongs to the G-protein coupled receptor 1 family. Opsin subfamily. In terms of processing, phosphorylated on some or all of the serine and threonine residues present in the C-terminal region.

The protein resides in the membrane. Its function is as follows. Visual pigments are the light-absorbing molecules that mediate vision. They consist of an apoprotein, opsin, covalently linked to cis-retinal. The chain is Rhodopsin from Sphodromantis sp. (Mantis).